Here is a 312-residue protein sequence, read N- to C-terminus: Aquaporin Lacbi1:391485 (312 aa).

Over 1–50 (MDDKFDDDALPNSKTTPEDYGDKLAEYDYTNTFPNTWMRLREPFREYIAE) the chain is Cytoplasmic. A helical transmembrane segment spans residues 51 to 71 (FVGVAVLIIFGVGADCQVVLS). Residues 72–89 (ANTGVAPSPKGDYLSLNC) lie on the Extracellular side of the membrane. A helical membrane pass occupies residues 90 to 110 (GWAIGTAMGVWISGGISGGHI). Residues 111 to 113 (NPA) carry the NPA 1 motif. Topologically, residues 111–128 (NPAVTLALMAWRGFPWWK) are cytoplasmic. The helical transmembrane segment at 129-149 (VPGFIFAQLLGGIVGAGLVYV) threads the bilayer. Residues 150 to 183 (NYIHAIDIVEGGRHIRTLDTAGLFATYAADYMTN) lie on the Extracellular side of the membrane. Residue N183 is glycosylated (N-linked (GlcNAc...) asparagine). The chain crosses the membrane as a helical span at residues 184–204 (VSCFFSEFLATAVLIVVIHAM). Topologically, residues 205–213 (NDKRNAPPP) are cytoplasmic. The chain crosses the membrane as a helical span at residues 214–234 (AGLAPLVLFFLILGIGASLGM). At 235 to 267 (ETGYAINPARDLGPRMLTAMVGYGRQVFAFRNQ) the chain is on the extracellular side. The NPA 2 signature appears at 241–243 (NPA). The chain crosses the membrane as a helical span at residues 268–288 (YWIWCPVIAPFLGAQVGTIFY). The Cytoplasmic portion of the chain corresponds to 289–312 (DLFFYKGQDNVFGRLGSHIHISPA).

This sequence belongs to the MIP/aquaporin (TC 1.A.8) family.

The protein localises to the membrane. The enzyme catalyses H2O(in) = H2O(out). It catalyses the reaction glycerol(in) = glycerol(out). The catalysed reaction is NH4(+)(in) = NH4(+)(out). In terms of biological role, water channel required to facilitate the transport of water across membranes. In addition to water, also shows strong glycerol and ammonium transport activities. May be involved in fungal nitrogen (ammonium) support of the plant host in symbiosis. Glycerol accumulation has never been observed in ectomycorrhizal (ECM) fungi, therefore, glycerol permeability of Lacbi1:391485 might be a relict of the affiliation of the protein to the group of aquaglyceroporins, and other osmotic active compounds (e.g. trehalose or mannitol) may have taken over glycerol function in ECM fungi. The polypeptide is Aquaporin Lacbi1:391485 (Laccaria bicolor (strain S238N-H82 / ATCC MYA-4686) (Bicoloured deceiver)).